The sequence spans 955 residues: Kinesin-like protein NACK2 (955 aa).

The Kinesin motor domain occupies 36-357; that stretch reads KILVTIRVRP…LCFATSAKEV (322 aa). 120-127 serves as a coordination point for ATP; it reads GQTSSGKT. 2 coiled-coil regions span residues 366-443 and 566-604; these read VVAE…LKGS and KASL…VMHL.

It belongs to the TRAFAC class myosin-kinesin ATPase superfamily. Kinesin family. KIN-7 subfamily.

Its subcellular location is the cytoplasm. It is found in the nucleus. It localises to the cytoskeleton. The protein localises to the phragmoplast. In terms of biological role, probable plus end-directed motor protein that may function in the NACK-PQR (NPK1-NQK1/MEK1-NRK1) MAP kinase signaling pathway, which is essential for somatic cell cytokinesis, especially for the cell-plate formation and its expansion. May regulate the activity and the localization of NPK1, probably by association through the non-catalytic region of the kinase. This Nicotiana tabacum (Common tobacco) protein is Kinesin-like protein NACK2 (NACK2).